The chain runs to 282 residues: uncharacterized protein (282 aa).

Residues 22–42 form a helical membrane-spanning segment; it reads YLFTLGSFVTMFFVLCISPVF.

The protein resides in the cell membrane. This is an uncharacterized protein from Bacillus anthracis.